The following is a 607-amino-acid chain: Large ribosomal subunit assembly factor BipA (607 aa).

The region spanning 3–198 (EKLRNIAIIA…AIVDHVPAPD (196 aa)) is the tr-type G domain. Residues 15–20 (DHGKTT) and 128–131 (NKVD) contribute to the GTP site.

Belongs to the TRAFAC class translation factor GTPase superfamily. Classic translation factor GTPase family. BipA subfamily. In terms of assembly, monomer.

It localises to the cytoplasm. It carries out the reaction GTP + H2O = GDP + phosphate + H(+). Functionally, a 50S ribosomal subunit assembly protein with GTPase activity, required for 50S subunit assembly at low temperatures, may also play a role in translation. Binds GTP and analogs. Binds the 70S ribosome between the 30S and 50S subunits, in a similar position as ribosome-bound EF-G; it contacts a number of ribosomal proteins, both rRNAs and the A-site tRNA. The polypeptide is Large ribosomal subunit assembly factor BipA (Shigella flexneri).